Consider the following 305-residue polypeptide: UDP-3-O-acyl-N-acetylglucosamine deacetylase (305 aa).

Residues H78, H237, and D241 each coordinate Zn(2+). The active-site Proton donor is the H264.

It belongs to the LpxC family. Zn(2+) serves as cofactor.

It carries out the reaction a UDP-3-O-[(3R)-3-hydroxyacyl]-N-acetyl-alpha-D-glucosamine + H2O = a UDP-3-O-[(3R)-3-hydroxyacyl]-alpha-D-glucosamine + acetate. It functions in the pathway glycolipid biosynthesis; lipid IV(A) biosynthesis; lipid IV(A) from (3R)-3-hydroxytetradecanoyl-[acyl-carrier-protein] and UDP-N-acetyl-alpha-D-glucosamine: step 2/6. Its function is as follows. Catalyzes the hydrolysis of UDP-3-O-myristoyl-N-acetylglucosamine to form UDP-3-O-myristoylglucosamine and acetate, the committed step in lipid A biosynthesis. This Burkholderia ambifaria (strain MC40-6) protein is UDP-3-O-acyl-N-acetylglucosamine deacetylase.